A 431-amino-acid polypeptide reads, in one-letter code: 23S rRNA (uracil(1939)-C(5))-methyltransferase RlmD (431 aa).

The 61-residue stretch at 8–68 folds into the TRAM domain; it reads KRRVTTRQII…SKYSRGQVKR (61 aa). [4Fe-4S] cluster contacts are provided by Cys-81, Cys-87, Cys-90, and Cys-162. S-adenosyl-L-methionine contacts are provided by Gln-265, Phe-294, Asn-299, Glu-315, Asn-342, and Asp-363. Residue Cys-389 is the Nucleophile of the active site.

It belongs to the class I-like SAM-binding methyltransferase superfamily. RNA M5U methyltransferase family. RlmD subfamily.

The catalysed reaction is uridine(1939) in 23S rRNA + S-adenosyl-L-methionine = 5-methyluridine(1939) in 23S rRNA + S-adenosyl-L-homocysteine + H(+). Catalyzes the formation of 5-methyl-uridine at position 1939 (m5U1939) in 23S rRNA. The chain is 23S rRNA (uracil(1939)-C(5))-methyltransferase RlmD from Enterobacter sp. (strain 638).